Consider the following 211-residue polypeptide: Large ribosomal subunit protein uL4 (211 aa).

The interval 52-79 (GRAEVHGSNSKPYSQKGTGRARRGDKKS) is disordered. Polar residues predominate over residues 58 to 68 (GSNSKPYSQKG).

It belongs to the universal ribosomal protein uL4 family. As to quaternary structure, part of the 50S ribosomal subunit.

One of the primary rRNA binding proteins, this protein initially binds near the 5'-end of the 23S rRNA. It is important during the early stages of 50S assembly. It makes multiple contacts with different domains of the 23S rRNA in the assembled 50S subunit and ribosome. Its function is as follows. Forms part of the polypeptide exit tunnel. This Treponema denticola (strain ATCC 35405 / DSM 14222 / CIP 103919 / JCM 8153 / KCTC 15104) protein is Large ribosomal subunit protein uL4.